The following is a 283-amino-acid chain: ATP synthase gamma chain (283 aa).

The protein belongs to the ATPase gamma chain family. F-type ATPases have 2 components, CF(1) - the catalytic core - and CF(0) - the membrane proton channel. CF(1) has five subunits: alpha(3), beta(3), gamma(1), delta(1), epsilon(1). CF(0) has three main subunits: a, b and c.

It is found in the cell membrane. In terms of biological role, produces ATP from ADP in the presence of a proton gradient across the membrane. The gamma chain is believed to be important in regulating ATPase activity and the flow of protons through the CF(0) complex. The chain is ATP synthase gamma chain from Clostridium beijerinckii (strain ATCC 51743 / NCIMB 8052) (Clostridium acetobutylicum).